The following is a 133-amino-acid chain: uncharacterized protein (133 aa).

The helical transmembrane segment at 11-31 (YFLISVFLIFIVSGITYFYST) threads the bilayer.

The protein localises to the membrane. This is an uncharacterized protein from Borreliella burgdorferi (strain ATCC 35210 / DSM 4680 / CIP 102532 / B31) (Borrelia burgdorferi).